A 333-amino-acid polypeptide reads, in one-letter code: Ketol-acid reductoisomerase (NADP(+)) (333 aa).

The KARI N-terminal Rossmann domain maps to 2 to 182; sequence AKLYYEKDCN…GGARAGVLKT (181 aa). Residues 25-28, Ser51, Ser53, and 83-86 each bind NADP(+); these read YGSQ and DEKQ. The active site involves His108. Gly134 lines the NADP(+) pocket. A KARI C-terminal knotted domain is found at 183–328; that stretch reads TFKEETETDL…KELRDMMSWS (146 aa). Residues Asp191, Glu195, Glu227, and Glu231 each contribute to the Mg(2+) site. Ser252 is a substrate binding site.

The protein belongs to the ketol-acid reductoisomerase family. Mg(2+) serves as cofactor.

It carries out the reaction (2R)-2,3-dihydroxy-3-methylbutanoate + NADP(+) = (2S)-2-acetolactate + NADPH + H(+). The catalysed reaction is (2R,3R)-2,3-dihydroxy-3-methylpentanoate + NADP(+) = (S)-2-ethyl-2-hydroxy-3-oxobutanoate + NADPH + H(+). It functions in the pathway amino-acid biosynthesis; L-isoleucine biosynthesis; L-isoleucine from 2-oxobutanoate: step 2/4. Its pathway is amino-acid biosynthesis; L-valine biosynthesis; L-valine from pyruvate: step 2/4. Involved in the biosynthesis of branched-chain amino acids (BCAA). Catalyzes an alkyl-migration followed by a ketol-acid reduction of (S)-2-acetolactate (S2AL) to yield (R)-2,3-dihydroxy-isovalerate. In the isomerase reaction, S2AL is rearranged via a Mg-dependent methyl migration to produce 3-hydroxy-3-methyl-2-ketobutyrate (HMKB). In the reductase reaction, this 2-ketoacid undergoes a metal-dependent reduction by NADPH to yield (R)-2,3-dihydroxy-isovalerate. In Alkaliphilus metalliredigens (strain QYMF), this protein is Ketol-acid reductoisomerase (NADP(+)).